A 296-amino-acid chain; its full sequence is tRNA-cytidine(32) 2-sulfurtransferase (296 aa).

Positions 72-77 (SGGKDS) match the PP-loop motif motif. Residues C147, C150, and C238 each contribute to the [4Fe-4S] cluster site.

The protein belongs to the TtcA family. As to quaternary structure, homodimer. The cofactor is Mg(2+). Requires [4Fe-4S] cluster as cofactor.

Its subcellular location is the cytoplasm. The enzyme catalyses cytidine(32) in tRNA + S-sulfanyl-L-cysteinyl-[cysteine desulfurase] + AH2 + ATP = 2-thiocytidine(32) in tRNA + L-cysteinyl-[cysteine desulfurase] + A + AMP + diphosphate + H(+). The protein operates within tRNA modification. Catalyzes the ATP-dependent 2-thiolation of cytidine in position 32 of tRNA, to form 2-thiocytidine (s(2)C32). The sulfur atoms are provided by the cysteine/cysteine desulfurase (IscS) system. In Sinorhizobium fredii (strain NBRC 101917 / NGR234), this protein is tRNA-cytidine(32) 2-sulfurtransferase.